The primary structure comprises 245 residues: 3-dehydroquinate dehydratase (245 aa).

3-dehydroquinate-binding positions include 35–37 and Arg-70; that span reads EFR. His-132 functions as the Proton donor/acceptor in the catalytic mechanism. Lys-158 serves as the catalytic Schiff-base intermediate with substrate. Residues Arg-199, Thr-220, and Gln-224 each contribute to the 3-dehydroquinate site.

The protein belongs to the type-I 3-dehydroquinase family. In terms of assembly, homodimer.

It carries out the reaction 3-dehydroquinate = 3-dehydroshikimate + H2O. The protein operates within metabolic intermediate biosynthesis; chorismate biosynthesis; chorismate from D-erythrose 4-phosphate and phosphoenolpyruvate: step 3/7. In terms of biological role, involved in the third step of the chorismate pathway, which leads to the biosynthesis of aromatic amino acids. Catalyzes the cis-dehydration of 3-dehydroquinate (DHQ) and introduces the first double bond of the aromatic ring to yield 3-dehydroshikimate. In Haloquadratum walsbyi (strain DSM 16790 / HBSQ001), this protein is 3-dehydroquinate dehydratase.